Consider the following 1762-residue polypeptide: Non-reducing polyketide synthase PKS8-1 (1762 aa).

Positions 17 to 247 (DIYRGLHNHS…ARYIELPVYG (231 aa)) are N-terminal acylcarrier protein transacylase domain (SAT). The 435-residue stretch at 385-819 (QSKLAITGIS…GGNTTMVLEE (435 aa)) folds into the Ketosynthase family 3 (KS3) domain. Residues C558, H694, and H737 each act as for beta-ketoacyl synthase activity in the active site. A malonyl-CoA:ACP transacylase (MAT) domain region spans residues 920-1240 (FSFTGQGASH…MAALHLTGVA (321 aa)). Residues 1308–1622 (TSTVQQVIAL…PRILLNRFFS (315 aa)) are product template (PT) domain. The tract at residues 1312–1448 (QQVIALEVEG…GDANDWLSSW (137 aa)) is N-terminal hotdog fold. In terms of domain architecture, PKS/mFAS DH spans 1312-1618 (QQVIALEVEG…FRSYPRILLN (307 aa)). Residue H1344 is the Proton acceptor; for dehydratase activity of the active site. The segment at 1471-1618 (ASRFTRNMAY…FRSYPRILLN (148 aa)) is C-terminal hotdog fold. The active-site Proton donor; for dehydratase activity is the D1529. A disordered region spans residues 1632–1689 (RAGNAATVTPQVTIPKPPSSLKTPAPANPSRRDSGVESKPLPPPQPKQAPPSTDSENS). Residues 1671-1680 (PLPPPQPKQA) are compositionally biased toward pro residues. Residues 1685–1762 (DSENSTISKA…DMRRWLEEHY (78 aa)) form the Carrier domain. The residue at position 1722 (S1722) is an O-(pantetheine 4'-phosphoryl)serine.

It catalyses the reaction holo-[ACP] + 8 malonyl-CoA + 8 H(+) = atrochrysone carboxyl-[ACP] + 8 CO2 + 8 CoA + 2 H2O. Its pathway is secondary metabolite biosynthesis. In terms of biological role, non-reducing polyketide synthase; part of the gene cluster that mediates the biosynthesis of an emodin derivative that may be involved in black Sigatoka disease of banana. The pathway begins with the synthesis of atrochrysone thioester by the polyketide synthase PKS8-1. The atrochrysone carboxyl ACP thioesterase MYCFIDRAFT_190111 then breaks the thioester bond and releases the atrochrysone carboxylic acid from PKS8-1. The decarboxylase MYCFIDRAFT_34057 then catalyzes the concerted decarboxylation-elimination required to convert atochrysone carboxylic acid into emodin anthrone, which is further oxidized to emodin by the anthrone oxygenase MYCFIDRAFT_34418. The functions of the other tailoring enzymes as well as the final product of the cluster have still to be identified. This is Non-reducing polyketide synthase PKS8-1 (PKS8-1) from Pseudocercospora fijiensis (strain CIRAD86) (Black leaf streak disease fungus).